A 573-amino-acid chain; its full sequence is 2-succinyl-5-enolpyruvyl-6-hydroxy-3-cyclohexene-1-carboxylate synthase (573 aa).

Belongs to the TPP enzyme family. MenD subfamily. As to quaternary structure, homodimer. Requires Mg(2+) as cofactor. Mn(2+) serves as cofactor. The cofactor is thiamine diphosphate.

It carries out the reaction isochorismate + 2-oxoglutarate + H(+) = 5-enolpyruvoyl-6-hydroxy-2-succinyl-cyclohex-3-ene-1-carboxylate + CO2. Its pathway is quinol/quinone metabolism; 1,4-dihydroxy-2-naphthoate biosynthesis; 1,4-dihydroxy-2-naphthoate from chorismate: step 2/7. It functions in the pathway quinol/quinone metabolism; menaquinone biosynthesis. Functionally, catalyzes the thiamine diphosphate-dependent decarboxylation of 2-oxoglutarate and the subsequent addition of the resulting succinic semialdehyde-thiamine pyrophosphate anion to isochorismate to yield 2-succinyl-5-enolpyruvyl-6-hydroxy-3-cyclohexene-1-carboxylate (SEPHCHC). The sequence is that of 2-succinyl-5-enolpyruvyl-6-hydroxy-3-cyclohexene-1-carboxylate synthase from Shewanella putrefaciens (strain CN-32 / ATCC BAA-453).